Consider the following 350-residue polypeptide: Small ribosomal subunit biogenesis GTPase RsgA (350 aa).

Over residues 1–17 (MSKNKLSKGQQRRVNAN) the composition is skewed to polar residues. Positions 1-27 (MSKNKLSKGQQRRVNANHQRRLKTSAE) are disordered. The region spanning 104–273 (TSVLTRPDFY…VIDSPGVREF (170 aa)) is the CP-type G domain. GTP contacts are provided by residues 160–163 (NKID) and 214–222 (GQSGVGKSS). Zn(2+) is bound by residues cysteine 297, cysteine 302, histidine 304, and cysteine 310.

Belongs to the TRAFAC class YlqF/YawG GTPase family. RsgA subfamily. In terms of assembly, monomer. Associates with 30S ribosomal subunit, binds 16S rRNA. Zn(2+) is required as a cofactor.

The protein resides in the cytoplasm. Its function is as follows. One of several proteins that assist in the late maturation steps of the functional core of the 30S ribosomal subunit. Helps release RbfA from mature subunits. May play a role in the assembly of ribosomal proteins into the subunit. Circularly permuted GTPase that catalyzes slow GTP hydrolysis, GTPase activity is stimulated by the 30S ribosomal subunit. The protein is Small ribosomal subunit biogenesis GTPase RsgA of Salmonella dublin (strain CT_02021853).